Consider the following 843-residue polypeptide: MTSIIKLKVFSGAKDEGPLCYLLQVDGDYILLDCGWDERFGLQYFEELKPFIPKISAVLISHPDPLHLGGLPYLVSKCGLTAPVYATVPVYKMGQMFIYDMVYSHLDVEEFEHYTLDDVDTAFEKVEQVKYNQTVVLKGDSGVHFTALPAGHMLGGSIWRICRVTGEDIVYCVDFNHKKERHLNGCSFDNFNRPHLLITGAHHISLPQMRRKDRDEQLVTKILRTVRQKGDCMIVIDTAGRVLELAHLLDQLWSNADAGLSTYNLVMMSHVASSVVQFAKSQLEWMNEKLFKYDSSSARYNPFTLKHVTLCHSHQELMRVRSPKVVLCSSQDMESGFSRELFLDWCSDPRNGVILTARPASFTLAAKLVNMAERANDGVLKHEDRLISLVVKKRVALEGEELLEYKRRKAERDAEETRLRMERARRQAQANESDDSDDDDIAAPIVPRHSEKDFRSFDGSENDAHTFDIMAKWDNQQKASFFKTTKKSFPMFPYIEEKVKWDDYGEVIKPEDYTVISKIDLRKGQNKDEPVVVKKREEEEEVYNPNDHVEEMPTKCVEFKNRVEVSCRIEFIEYEGISDGESTKKLLAGLLPRQIIVVHGSRDDTRDLVAYFADSGFDTTMLKAPEAGALVDASVESFIYQVALSDALLADIQFKEVSEGNSLAWIDARVMEKEAIDNMLAVGTSNLMIDDKNREEDVNDQEENGATEGEGNAEPMEIGENGSQESLAISESGKEVENGHTNDSRTKKGTKGKIRGNLILDPLPKRLIPIHQAVFVNDPKLSDFKNLLTDKGYKAEFLSGTLLINGGNCSIRRNDTGVFQMEGAFTKDYYKLRRLFYDQFAVL.

Residues 414–425 (AEETRLRMERAR) show a composition bias toward basic and acidic residues. 2 disordered regions span residues 414–443 (AEET…DIAA) and 691–753 (DKNR…TKGK). The segment covering 432 to 441 (ESDDSDDDDI) has biased composition (acidic residues). Residues 732–746 (SGKEVENGHTNDSRT) are compositionally biased toward basic and acidic residues.

Belongs to the metallo-beta-lactamase superfamily. RNA-metabolizing metallo-beta-lactamase-like family. CPSF2/YSH1 subfamily. As to quaternary structure, CPSF is a heterotetramer composed of four distinct subunits 160, 100, 70 and 30 kDa.

It localises to the nucleus. CPSF plays a key role in pre-mRNA 3'-end formation, recognizing the AAUAAA signal sequence and interacting with poly(A)polymerase and other factors to bring about cleavage and poly(A) addition. This is Probable cleavage and polyadenylation specificity factor subunit 2 (cpsf-2) from Caenorhabditis elegans.